We begin with the raw amino-acid sequence, 203 residues long: Holliday junction branch migration complex subunit RuvA (203 aa).

Residues 1–63 are domain I; that stretch reads MYEYLKGLVT…DTDITLFGFY (63 aa). The tract at residues 64 to 142 is domain II; the sequence is DLDEKQLFQK…DLEQSATLVG (79 aa). Positions 143 to 153 are flexible linker; that stretch reads QTAIDLGSQGD. The interval 153-203 is domain III; that stretch reads DSPELSDALAALSALGYSAREVKAITPKLTDFAAQTTDQYLREGLRLLMKK.

This sequence belongs to the RuvA family. As to quaternary structure, homotetramer. Forms an RuvA(8)-RuvB(12)-Holliday junction (HJ) complex. HJ DNA is sandwiched between 2 RuvA tetramers; dsDNA enters through RuvA and exits via RuvB. An RuvB hexamer assembles on each DNA strand where it exits the tetramer. Each RuvB hexamer is contacted by two RuvA subunits (via domain III) on 2 adjacent RuvB subunits; this complex drives branch migration. In the full resolvosome a probable DNA-RuvA(4)-RuvB(12)-RuvC(2) complex forms which resolves the HJ.

It is found in the cytoplasm. The RuvA-RuvB-RuvC complex processes Holliday junction (HJ) DNA during genetic recombination and DNA repair, while the RuvA-RuvB complex plays an important role in the rescue of blocked DNA replication forks via replication fork reversal (RFR). RuvA specifically binds to HJ cruciform DNA, conferring on it an open structure. The RuvB hexamer acts as an ATP-dependent pump, pulling dsDNA into and through the RuvAB complex. HJ branch migration allows RuvC to scan DNA until it finds its consensus sequence, where it cleaves and resolves the cruciform DNA. The polypeptide is Holliday junction branch migration complex subunit RuvA (Latilactobacillus sakei subsp. sakei (strain 23K) (Lactobacillus sakei subsp. sakei)).